A 363-amino-acid polypeptide reads, in one-letter code: Protein EXORDIUM-like 5 (363 aa).

The first 25 residues, Met1 to Ser25, serve as a signal peptide directing secretion. Asn144 carries an N-linked (GlcNAc...) asparagine glycan.

Belongs to the EXORDIUM family.

Its subcellular location is the secreted. It is found in the extracellular space. The protein resides in the apoplast. Functionally, may play a role in a brassinosteroid-dependent regulation of growth and development. The polypeptide is Protein EXORDIUM-like 5 (EXL5) (Arabidopsis thaliana (Mouse-ear cress)).